The following is a 2060-amino-acid chain: Unconventional myosin-X (2060 aa).

Residue M1 is modified to N-acetylmethionine. One can recognise a Myosin motor domain in the interval 63-739 (EGVDDMASLT…LEQKLEKRRE (677 aa)). Residues N104, Y113, 160-165 (GAGKTE), and N215 each bind ATP. Positions 619–641 (LHSLMATLSSSNPFFVRCIKPNT) are actin-binding. IQ domains follow at residues 742–771 (IDRA…GVVT), 765–794 (VLCG…AAIV), and 788–817 (LKKA…EKRE). Residues 814 to 882 (EKRELEERKR…LTRELEKQRE (69 aa)) form an SAH region. A coiled-coil region spans residues 883-933 (NKQVEEILRLEKEIEDLQRMKEQQELSLTEASLQKLQQLRDEELRRLEDEA). A phosphoserine mark is found at S961, S964, and S967. 2 disordered regions span residues 971 to 1039 (SELA…PYMN) and 1064 to 1088 (SLHN…PSPD). The segment covering 991–1005 (PEEEVDEGFEADDDA) has biased composition (acidic residues). Residues 1064-1083 (SLHNSSSGESTYCMPQNNGD) are compositionally biased toward polar residues. T1160 carries the phosphothreonine modification. 2 consecutive PH domains span residues 1214-1312 (EALK…QVHS) and 1394-1499 (EFIV…NVTD). The MyTH4 domain maps to 1549–1697 (LPYGDINLNL…PSRDEIEALI (149 aa)). In terms of domain architecture, FERM spans 1702 to 2046 (MTSTVYCHGG…AYISMIVKKR (345 aa)).

Belongs to the TRAFAC class myosin-kinesin ATPase superfamily. Myosin family. As to quaternary structure, monomer, when in an inactive conformation in the cytosol. Homodimer in its active, membrane-bound conformation; antiparallel coiled coil-mediated dimer formation. Interacts with ECPAS. Interacts with DCC and ITGB5; the presence of DCC inhibits ITGB5 binding. Interacts with tubulin; ITGB5 or DCC binding inhibits tubulin binding. Interacts strongly with CALM3 and weakly with CALM, the CALM3 interaction is essential for function in filopodial extension and motility. Interacts with ITGB1, ITGB3 and ITGB5. Interacts with NEO1. Interacts with VASP.

It localises to the cytoplasm. Its subcellular location is the cytosol. The protein localises to the cell projection. It is found in the lamellipodium. The protein resides in the ruffle. It localises to the cytoskeleton. Its subcellular location is the filopodium tip. The protein localises to the cell cortex. It is found in the filopodium membrane. The protein resides in the cell membrane. Its function is as follows. Myosins are actin-based motor molecules with ATPase activity. Unconventional myosins serve in intracellular movements. MYO10 binds to actin filaments and actin bundles and functions as a plus end-directed motor. Moves with higher velocity and takes larger steps on actin bundles than on single actin filaments. The tail domain binds to membranous compartments containing phosphatidylinositol 3,4,5-trisphosphate or integrins, and mediates cargo transport along actin filaments. Regulates cell shape, cell spreading and cell adhesion. Stimulates the formation and elongation of filopodia. In hippocampal neurons it induces the formation of dendritic filopodia by trafficking the actin-remodeling protein VASP to the tips of filopodia, where it promotes actin elongation. Plays a role in formation of the podosome belt in osteoclasts. This is Unconventional myosin-X (Myo10) from Rattus norvegicus (Rat).